The following is an 89-amino-acid chain: UPF0250 protein Bphyt_0500 (89 aa).

Belongs to the UPF0250 family.

The chain is UPF0250 protein Bphyt_0500 from Paraburkholderia phytofirmans (strain DSM 17436 / LMG 22146 / PsJN) (Burkholderia phytofirmans).